Reading from the N-terminus, the 294-residue chain is NAD kinase (294 aa).

Aspartate 74 (proton acceptor) is an active-site residue. Residues 74–75 (DG), 148–149 (NE), histidine 159, arginine 176, aspartate 178, 189–194 (TAYSLS), and glutamine 249 each bind NAD(+).

It belongs to the NAD kinase family. The cofactor is a divalent metal cation.

The protein resides in the cytoplasm. The enzyme catalyses NAD(+) + ATP = ADP + NADP(+) + H(+). Its function is as follows. Involved in the regulation of the intracellular balance of NAD and NADP, and is a key enzyme in the biosynthesis of NADP. Catalyzes specifically the phosphorylation on 2'-hydroxyl of the adenosine moiety of NAD to yield NADP. In Vibrio cholerae serotype O1 (strain ATCC 39541 / Classical Ogawa 395 / O395), this protein is NAD kinase.